The chain runs to 1047 residues: Exportin-6 (1047 aa).

Residues 32–98 form the Importin N-terminal domain; that stretch reads IDTILNNYKA…KGLLLDIYLN (67 aa).

It belongs to the exportin family.

The protein resides in the nucleus. It is found in the cytoplasm. Its function is as follows. Probably mediates the nuclear export of actin and profilin-actin complexes. This Dictyostelium discoideum (Social amoeba) protein is Exportin-6 (xpo6).